Consider the following 424-residue polypeptide: Protein-glutamate methylesterase/protein-glutamine glutaminase (424 aa).

The Response regulatory domain maps to Arg-6–Thr-123. Asp-57 bears the 4-aspartylphosphate mark. Residues Ser-177–Gly-210 form a disordered region. The CheB-type methylesterase domain occupies Arg-229 to Ala-423. Catalysis depends on residues Ser-241, His-268, and Asp-365.

The protein belongs to the CheB family. Post-translationally, phosphorylated by CheA. Phosphorylation of the N-terminal regulatory domain activates the methylesterase activity.

Its subcellular location is the cytoplasm. It carries out the reaction [protein]-L-glutamate 5-O-methyl ester + H2O = L-glutamyl-[protein] + methanol + H(+). The enzyme catalyses L-glutaminyl-[protein] + H2O = L-glutamyl-[protein] + NH4(+). In terms of biological role, involved in chemotaxis. Part of a chemotaxis signal transduction system that modulates chemotaxis in response to various stimuli. Catalyzes the demethylation of specific methylglutamate residues introduced into the chemoreceptors (methyl-accepting chemotaxis proteins or MCP) by CheR. Also mediates the irreversible deamidation of specific glutamine residues to glutamic acid. The chain is Protein-glutamate methylesterase/protein-glutamine glutaminase from Moorella thermoacetica (strain ATCC 39073 / JCM 9320).